The sequence spans 150 residues: Large ribosomal subunit protein bL9 (150 aa).

The protein belongs to the bacterial ribosomal protein bL9 family.

In terms of biological role, binds to the 23S rRNA. The chain is Large ribosomal subunit protein bL9 from Streptococcus sanguinis (strain SK36).